A 259-amino-acid polypeptide reads, in one-letter code: Binding partner of ACD11 1 (259 aa).

Residues 6–77 form the RRM domain; that stretch reads RSVKVGNLSS…QSVIIELAPN (72 aa). Positions 219-259 are disordered; the sequence is GEVGQKTKEKVEAEQPSQPAQSQQQLPEGYSPIHSSEYSKN. A compositionally biased stretch (low complexity) spans 232–243; that stretch reads EQPSQPAQSQQQ.

Interacts with ACD11, PR1F2 and PR1F3.

The protein resides in the cytoplasm. Its subcellular location is the membrane. The chain is Binding partner of ACD11 1 (BPA1) from Arabidopsis thaliana (Mouse-ear cress).